A 236-amino-acid polypeptide reads, in one-letter code: uncharacterized protein (236 aa).

3 disordered regions span residues 1 to 48, 67 to 122, and 134 to 192; these read MHLR…RTFS, VHTP…HSPR, and KLHP…PNNT. The span at 85–99 shows a compositional bias: basic residues; that stretch reads RAHRTAKHPARRQSC. The segment covering 180 to 189 has biased composition (pro residues); that stretch reads PSPAIKPSPP.

This is an uncharacterized protein from Encephalitozoon cuniculi (strain GB-M1) (Microsporidian parasite).